The chain runs to 470 residues: 3-isopropylmalate dehydratase large subunit (470 aa).

Residues C349, C409, and C412 each coordinate [4Fe-4S] cluster.

This sequence belongs to the aconitase/IPM isomerase family. LeuC type 1 subfamily. As to quaternary structure, heterodimer of LeuC and LeuD. Requires [4Fe-4S] cluster as cofactor.

It catalyses the reaction (2R,3S)-3-isopropylmalate = (2S)-2-isopropylmalate. The protein operates within amino-acid biosynthesis; L-leucine biosynthesis; L-leucine from 3-methyl-2-oxobutanoate: step 2/4. Its function is as follows. Catalyzes the isomerization between 2-isopropylmalate and 3-isopropylmalate, via the formation of 2-isopropylmaleate. This chain is 3-isopropylmalate dehydratase large subunit, found in Afipia carboxidovorans (strain ATCC 49405 / DSM 1227 / KCTC 32145 / OM5) (Oligotropha carboxidovorans).